The following is a 171-amino-acid chain: 6,7-dimethyl-8-ribityllumazine synthase (171 aa).

5-amino-6-(D-ribitylamino)uracil contacts are provided by residues F24, 58 to 60 (ALE), and 82 to 84 (AVI). Residue 87–88 (ET) participates in (2S)-2-hydroxy-3-oxobutyl phosphate binding. Catalysis depends on H90, which acts as the Proton donor. N115 is a binding site for 5-amino-6-(D-ribitylamino)uracil. R129 is a binding site for (2S)-2-hydroxy-3-oxobutyl phosphate. The segment at 150-171 (ALDQLGDDEDEEEDEDDEEERA) is disordered. Residues 154 to 171 (LGDDEDEEEDEDDEEERA) show a composition bias toward acidic residues.

Belongs to the DMRL synthase family.

It catalyses the reaction (2S)-2-hydroxy-3-oxobutyl phosphate + 5-amino-6-(D-ribitylamino)uracil = 6,7-dimethyl-8-(1-D-ribityl)lumazine + phosphate + 2 H2O + H(+). The protein operates within cofactor biosynthesis; riboflavin biosynthesis; riboflavin from 2-hydroxy-3-oxobutyl phosphate and 5-amino-6-(D-ribitylamino)uracil: step 1/2. Catalyzes the formation of 6,7-dimethyl-8-ribityllumazine by condensation of 5-amino-6-(D-ribitylamino)uracil with 3,4-dihydroxy-2-butanone 4-phosphate. This is the penultimate step in the biosynthesis of riboflavin. This Burkholderia cenocepacia (strain HI2424) protein is 6,7-dimethyl-8-ribityllumazine synthase.